Here is a 434-residue protein sequence, read N- to C-terminus: Monodehydroascorbate reductase 1, peroxisomal (434 aa).

Residues 13–16 (GGVS), E40, R47, K52, I95, and 146–147 (RE) each bind FAD. NAD(+)-binding positions include 171 to 177 (GGYIGLE), E195, R201, and G260. Position 173 to 177 (173 to 177 (YIGLE)) interacts with NADP(+). NADP(+)-binding residues include R201 and G260. D297 is a binding site for FAD. 313–314 (EH) is an NAD(+) binding site. 313-314 (EH) serves as a coordination point for NADP(+). Position 315 (V315) interacts with FAD. L-ascorbate is bound at residue R319. Y348 is an FAD binding site. Residue Y348 participates in NAD(+) binding. An NADP(+)-binding site is contributed by Y348. R350 is a binding site for L-ascorbate. At S416 the chain carries Phosphoserine.

It belongs to the FAD-dependent oxidoreductase family. The cofactor is FAD.

The protein localises to the peroxisome matrix. It carries out the reaction 2 monodehydro-L-ascorbate radical + NADH + H(+) = 2 L-ascorbate + NAD(+). Its function is as follows. Catalyzes the conversion of monodehydroascorbate to ascorbate, oxidizing NADH in the process. The chain is Monodehydroascorbate reductase 1, peroxisomal from Arabidopsis thaliana (Mouse-ear cress).